The sequence spans 368 residues: Alanine racemase (368 aa).

K40 acts as the Proton acceptor; specific for D-alanine in catalysis. K40 is subject to N6-(pyridoxal phosphate)lysine. R136 is a substrate binding site. Y263 acts as the Proton acceptor; specific for L-alanine in catalysis. Residue M310 coordinates substrate.

It belongs to the alanine racemase family. The cofactor is pyridoxal 5'-phosphate.

The catalysed reaction is L-alanine = D-alanine. Its pathway is amino-acid biosynthesis; D-alanine biosynthesis; D-alanine from L-alanine: step 1/1. Its function is as follows. Catalyzes the interconversion of L-alanine and D-alanine. May also act on other amino acids. In Streptococcus uberis (strain ATCC BAA-854 / 0140J), this protein is Alanine racemase (alr).